The chain runs to 337 residues: Zinc finger protein 488 (337 aa).

Positions 1–10 (MAAGTSTLLS) are enriched in polar residues. 3 disordered regions span residues 1–32 (MAAGTSTLLSLSGPADHMAEGKGAPLRPSVEK), 55–83 (SDTAAGKGSQDEAYTELSLPTAPNKPRLD), and 146–179 (SAWPGAPRSEQKSAFSKPAKRPAEKPKRSPMLLA). The tract at residues 69–184 (TELSLPTAPN…PMLLAGGSAE (116 aa)) is important for transcriptional repression activity. C2H2-type zinc fingers lie at residues 272-299 (NWCAKCNLAFRLTADLVFHMRSHHKREH) and 314-336 (LTCPVCHEYFRERHHLSRHMASH). The Nuclear localization signal signature appears at 295-302 (HKREHVGP).

This sequence belongs to the krueppel C2H2-type zinc-finger protein family. In terms of assembly, interacts with OLIG2.

It localises to the nucleus. In terms of biological role, transcriptional repressor. Plays a role in oligodendrocyte differentiation, together with OLIG2. Mediates Notch signaling-activated formation of oligodendrocyte precursors. Promotes differentiation of adult neural stem progenitor cells (NSPCs) into mature oligodendrocytes and contributes to remyelination following nerve injury. The protein is Zinc finger protein 488 (Znf488) of Mus musculus (Mouse).